Here is a 505-residue protein sequence, read N- to C-terminus: Maturase K (505 aa).

Belongs to the intron maturase 2 family. MatK subfamily.

The protein resides in the plastid. It localises to the chloroplast. Its function is as follows. Usually encoded in the trnK tRNA gene intron. Probably assists in splicing its own and other chloroplast group II introns. The protein is Maturase K of Silene otites (Spanish catchfly).